The following is a 236-amino-acid chain: uncharacterized protein (236 aa).

The helical transmembrane segment at 15–34 (GGMAHIISEAVIAGSIGLYF) threads the bilayer. The stretch at 36–71 (KKISALEQTVQELQSQLEVQNNQLQWLIQQQTRRLA) forms a coiled coil. Disordered stretches follow at residues 83-113 (SPLPPQRDYRQQSTTTNAAGNNGAYPSFQFK) and 185-236 (ATTQ…IDCE). 2 stretches are compositionally biased toward polar residues: residues 93–102 (QQSTTTNAAG) and 185–195 (ATTQVSTFSKP). The segment covering 225 to 236 (ALDKILNDIDCE) has biased composition (basic and acidic residues).

The protein localises to the membrane. This is an uncharacterized protein from Aedes vexans (Inland floodwater mosquito).